The following is a 143-amino-acid chain: Transcriptional regulator MraZ (143 aa).

SpoVT-AbrB domains are found at residues 5-47 (THSP…PIRE) and 76-119 (ASNE…DAQT).

This sequence belongs to the MraZ family. As to quaternary structure, forms oligomers.

It is found in the cytoplasm. The protein resides in the nucleoid. This Thermobifida fusca (strain YX) protein is Transcriptional regulator MraZ.